A 638-amino-acid chain; its full sequence is Homeobox protein 10 (638 aa).

3 disordered regions span residues 23–55 (ETQPTTPTTQPTTPTTNTISTTTNTITSTLNTN), 76–139 (TDEN…VNTN), and 195–219 (IANEDKESLPEPQTNSNVNGNEEAK). Low complexity-rich tracts occupy residues 24–55 (TQPTTPTTQPTTPTTNTISTTTNTITSTLNTN) and 80–139 (NTSV…VNTN). Residues 205-214 (EPQTNSNVNG) are compositionally biased toward polar residues. A DNA-binding region (homeobox) is located at residues 301–360 (NKKKRQRTSPEQLAILEQIFETDKMPSQQIRVRLANQLGMSSRRVQIWFQNKRAKVKRGG). Disordered stretches follow at residues 381 to 431 (EDED…TSSD) and 448 to 638 (SSSS…IVKN). Composition is skewed to low complexity over residues 388–411 (SLTIDESGNNNNNSGNNNNNNNNG), 419–430 (LSSSPTNLNTSS), and 462–501 (NNTNNNNNNNNNNNNNNNNNNNNNNNHTTTTTTTTTTTTT). Polar residues-rich tracts occupy residues 502 to 522 (SSSPPLTSFNFQLNQSLNKLT) and 545 to 573 (SLNSTASSLPSFPQIKLNSSSKHIPTDKQ). Residues 575 to 625 (NSDFSNFNNNNNNNNNNNNNNNNNNNINNNGNNNSNNNDSNNNNNKSNFSD) are compositionally biased toward low complexity.

The protein localises to the nucleus. Functionally, putative transcription factor. This chain is Homeobox protein 10 (hbx10), found in Dictyostelium discoideum (Social amoeba).